Consider the following 202-residue polypeptide: Holliday junction branch migration complex subunit RuvA (202 aa).

The tract at residues 1-63 (MIASLRGTVL…EDSMTLYGFT (63 aa)) is domain I. Residues 64 to 142 (SQDDRDMFHV…AFAPAESADL (79 aa)) form a domain II region. The tract at residues 143–148 (SSAAPA) is flexible linker. Positions 149–202 (AAGPVVEDVVEALIGLGFTDKMARPVVESVVAEQPDAATPVVLRAALSQLGAKK) are domain III.

It belongs to the RuvA family. As to quaternary structure, homotetramer. Forms an RuvA(8)-RuvB(12)-Holliday junction (HJ) complex. HJ DNA is sandwiched between 2 RuvA tetramers; dsDNA enters through RuvA and exits via RuvB. An RuvB hexamer assembles on each DNA strand where it exits the tetramer. Each RuvB hexamer is contacted by two RuvA subunits (via domain III) on 2 adjacent RuvB subunits; this complex drives branch migration. In the full resolvosome a probable DNA-RuvA(4)-RuvB(12)-RuvC(2) complex forms which resolves the HJ.

It is found in the cytoplasm. In terms of biological role, the RuvA-RuvB-RuvC complex processes Holliday junction (HJ) DNA during genetic recombination and DNA repair, while the RuvA-RuvB complex plays an important role in the rescue of blocked DNA replication forks via replication fork reversal (RFR). RuvA specifically binds to HJ cruciform DNA, conferring on it an open structure. The RuvB hexamer acts as an ATP-dependent pump, pulling dsDNA into and through the RuvAB complex. HJ branch migration allows RuvC to scan DNA until it finds its consensus sequence, where it cleaves and resolves the cruciform DNA. The sequence is that of Holliday junction branch migration complex subunit RuvA from Corynebacterium aurimucosum (strain ATCC 700975 / DSM 44827 / CIP 107346 / CN-1) (Corynebacterium nigricans).